The following is a 265-amino-acid chain: Phosphonates import ATP-binding protein PhnC 1 (265 aa).

An ABC transporter domain is found at 3-247 (LRLSGIELRH…HLDTLYANEQ (245 aa)). Position 36 to 43 (36 to 43 (GPSGAGKT)) interacts with ATP. The interval 245 to 265 (NEQLSPQPAPDVSETPWTPRC) is disordered.

It belongs to the ABC transporter superfamily. Phosphonates importer (TC 3.A.1.9.1) family. The complex is composed of two ATP-binding proteins (PhnC), two transmembrane proteins (PhnE) and a solute-binding protein (PhnD).

Its subcellular location is the cell inner membrane. The enzyme catalyses phosphonate(out) + ATP + H2O = phosphonate(in) + ADP + phosphate + H(+). Its function is as follows. Part of the ABC transporter complex PhnCDE involved in phosphonates import. Responsible for energy coupling to the transport system. The chain is Phosphonates import ATP-binding protein PhnC 1 from Pseudomonas savastanoi pv. phaseolicola (strain 1448A / Race 6) (Pseudomonas syringae pv. phaseolicola (strain 1448A / Race 6)).